The sequence spans 336 residues: Probable RNA methyltransferase Anae109_4379 (336 aa).

Glutamate 86 acts as the Proton acceptor in catalysis. A Radical SAM core domain is found at 93-322; it reads FDTHHTVCLS…PIVRRYSGGQ (230 aa). Cysteine 100 and cysteine 328 are disulfide-bonded. Cysteine 107, cysteine 111, and cysteine 114 together coordinate [4Fe-4S] cluster. S-adenosyl-L-methionine is bound by residues 154-155, serine 186, and 209-211; these read GE and SLN. The S-methylcysteine intermediate role is filled by cysteine 328.

This sequence belongs to the radical SAM superfamily. RlmN family. It depends on [4Fe-4S] cluster as a cofactor.

It localises to the cytoplasm. In Anaeromyxobacter sp. (strain Fw109-5), this protein is Probable RNA methyltransferase Anae109_4379.